The sequence spans 1184 residues: DNA-directed RNA polymerase subunit beta (1184 aa).

The interval 1160 to 1184 (DDDFTNQNDAFNIVQPENAAAEKTE) is disordered.

This sequence belongs to the RNA polymerase beta chain family. In terms of assembly, the RNAP catalytic core consists of 2 alpha, 1 beta, 1 beta' and 1 omega subunit. When a sigma factor is associated with the core the holoenzyme is formed, which can initiate transcription.

The enzyme catalyses RNA(n) + a ribonucleoside 5'-triphosphate = RNA(n+1) + diphosphate. Its function is as follows. DNA-dependent RNA polymerase catalyzes the transcription of DNA into RNA using the four ribonucleoside triphosphates as substrates. The sequence is that of DNA-directed RNA polymerase subunit beta from Listeria welshimeri serovar 6b (strain ATCC 35897 / DSM 20650 / CCUG 15529 / CIP 8149 / NCTC 11857 / SLCC 5334 / V8).